The primary structure comprises 115 residues: UPF0122 protein NT01CX_2214 (115 aa).

It belongs to the UPF0122 family.

In terms of biological role, might take part in the signal recognition particle (SRP) pathway. This is inferred from the conservation of its genetic proximity to ftsY/ffh. May be a regulatory protein. The polypeptide is UPF0122 protein NT01CX_2214 (Clostridium novyi (strain NT)).